The chain runs to 433 residues: V-type ATP synthase beta chain (433 aa).

It belongs to the ATPase alpha/beta chains family.

In terms of biological role, produces ATP from ADP in the presence of a proton gradient across the membrane. The V-type beta chain is a regulatory subunit. This chain is V-type ATP synthase beta chain, found in Borrelia turicatae (strain 91E135).